Here is a 284-residue protein sequence, read N- to C-terminus: Nucleotide-binding protein Shal_3708 (284 aa).

8-15 (GRSGSGKS) provides a ligand contact to ATP. A GTP-binding site is contributed by 56–59 (DIRN).

The protein belongs to the RapZ-like family.

In terms of biological role, displays ATPase and GTPase activities. The chain is Nucleotide-binding protein Shal_3708 from Shewanella halifaxensis (strain HAW-EB4).